The primary structure comprises 201 residues: UPF0056 membrane protein PYRAB13050 (201 aa).

Transmembrane regions (helical) follow at residues 8 to 28 (FAVLYVGLFAITNPVGAVPIF), 49 to 69 (ITVLVTLLTFALVGKWIFKFF), 73 to 93 (VDAFAIAGGILLFRMGMEMLS), 111 to 131 (VAVIPLAIPLISGPGAITTVM), 140 to 160 (PIVIATIIAIGISVYIILASG), and 181 to 201 (LILTSMAIQMIINGIKGAFGI).

This sequence belongs to the UPF0056 (MarC) family.

Its subcellular location is the cell membrane. This chain is UPF0056 membrane protein PYRAB13050, found in Pyrococcus abyssi (strain GE5 / Orsay).